Consider the following 423-residue polypeptide: Dihydrolipoyllysine-residue succinyltransferase component of 2-oxoglutarate dehydrogenase complex (423 aa).

The Lipoyl-binding domain maps to 1–76 (MPEVKVPELA…EVGQAIAVIG (76 aa)). Lysine 42 carries the N6-lipoyllysine modification. Positions 76–185 (GEGSGNASKE…APAKEEKKYN (110 aa)) are disordered. Over residues 80 to 96 (GNASKENSNDNTPQQND) the composition is skewed to polar residues. Over residues 99 to 115 (TNNKKEETTNKSADKAE) the composition is skewed to basic and acidic residues. The segment covering 116-131 (VNQTNDDNQQRVNATP) has biased composition (polar residues). In terms of domain architecture, Peripheral subunit-binding (PSBD) spans 128 to 164 (NATPSARRYARENGVNLAEVSPKTNDVVRKEDIDKKQ). Basic and acidic residues predominate over residues 153-164 (DVVRKEDIDKKQ). Over residues 165 to 177 (QAPASTQTTQQAP) the composition is skewed to low complexity. Active-site residues include histidine 394 and aspartate 398.

The protein belongs to the 2-oxoacid dehydrogenase family. Forms a 24-polypeptide structural core with octahedral symmetry. Part of the 2-oxoglutarate dehydrogenase (OGDH) complex composed of E1 (2-oxoglutarate dehydrogenase), E2 (dihydrolipoamide succinyltransferase) and E3 (dihydrolipoamide dehydrogenase); the complex contains multiple copies of the three enzymatic components (E1, E2 and E3). (R)-lipoate is required as a cofactor.

It catalyses the reaction N(6)-[(R)-dihydrolipoyl]-L-lysyl-[protein] + succinyl-CoA = N(6)-[(R)-S(8)-succinyldihydrolipoyl]-L-lysyl-[protein] + CoA. It participates in amino-acid degradation; L-lysine degradation via saccharopine pathway; glutaryl-CoA from L-lysine: step 6/6. In terms of biological role, E2 component of the 2-oxoglutarate dehydrogenase (OGDH) complex which catalyzes the second step in the conversion of 2-oxoglutarate to succinyl-CoA and CO(2). This is Dihydrolipoyllysine-residue succinyltransferase component of 2-oxoglutarate dehydrogenase complex (odhB) from Staphylococcus aureus (strain MRSA252).